The chain runs to 484 residues: MATERLNQVRTSVFQASQSLLQTLSTSLGPRGLDKMVVKDKKTVVTNDGATILKYLNHHPIHGILSSMSATQDEECGDGTTSVVILAGCLLESISSLLERNVHPSVICDNLEIAKKIGLRYIDRVKMECSEKDLISNVTTALCSKIASSTGEMAVEAIRGMEYVNGDKKNIRVVKKIGGNLDDVKAYKSILLECDLKDIPKKAKVGVIQFCLSAPKTNMDSKILINDPALMEKIIQDERKYILEMCKKIKKSGCTLLVVQKSILRESLSDLASHFLKQLNILVVNSVDRKDVDYICSAMNIQPVSEVDLLSPASLVDVETGEVEGMLEIKGYGCTILLRGCDDMVVEEAERSLNDALCVVKCLKELPFLVPGGGSIEMGIALMLSESTEGNIYVLREIAKAFEGVPYFLARNAGLYPVEIVSELRSELKQNCCAGISVRSGHAGDMVRDDSVVQPAKVSISVVTLALETVSMILKIDDILPARR.

Belongs to the TCP-1 chaperonin family. In terms of assembly, component of the T-complex protein 1 (TCP1) complex.

The protein resides in the cytoplasm. Molecular chaperone; assists the folding of proteins upon ATP hydrolysis. The polypeptide is T-complex protein 1 subunit delta (CCT4) (Encephalitozoon cuniculi (strain GB-M1) (Microsporidian parasite)).